The chain runs to 312 residues: Malate dehydrogenase (312 aa).

NAD(+) contacts are provided by residues 7-13 and aspartate 34; that span reads GAAGGIG. Residues arginine 81 and arginine 87 each contribute to the substrate site. NAD(+)-binding positions include asparagine 94 and 117–119; that span reads ITN. Substrate contacts are provided by asparagine 119 and arginine 153. The active-site Proton acceptor is the histidine 177. Methionine 227 contacts NAD(+).

Belongs to the LDH/MDH superfamily. MDH type 1 family. As to quaternary structure, homodimer.

The enzyme catalyses (S)-malate + NAD(+) = oxaloacetate + NADH + H(+). Its function is as follows. Catalyzes the reversible oxidation of malate to oxaloacetate. The protein is Malate dehydrogenase of Escherichia fergusonii (strain ATCC 35469 / DSM 13698 / CCUG 18766 / IAM 14443 / JCM 21226 / LMG 7866 / NBRC 102419 / NCTC 12128 / CDC 0568-73).